The sequence spans 235 residues: Orotidine 5'-phosphate decarboxylase (235 aa).

Residues D11, K33, D60 to T69, T119, R180, Q189, G209, and R210 contribute to the substrate site. The Proton donor role is filled by K62.

This sequence belongs to the OMP decarboxylase family. Type 1 subfamily. Homodimer.

The enzyme catalyses orotidine 5'-phosphate + H(+) = UMP + CO2. Its pathway is pyrimidine metabolism; UMP biosynthesis via de novo pathway; UMP from orotate: step 2/2. Its function is as follows. Catalyzes the decarboxylation of orotidine 5'-monophosphate (OMP) to uridine 5'-monophosphate (UMP). The polypeptide is Orotidine 5'-phosphate decarboxylase (Alkalilimnicola ehrlichii (strain ATCC BAA-1101 / DSM 17681 / MLHE-1)).